We begin with the raw amino-acid sequence, 134 residues long: Putative oxidoreductase CatD (134 aa).

The next 4 membrane-spanning stretches (helical) occupy residues 5–25 (FEIGTLLLRVITGIIFFVHGL), 46–66 (FMAYVIAAIELIGGVLVFFGL), 70–90 (IVGVLFALTLIGAIITVKLKA), and 91–111 (PFMGNAEFDYLLLLTSIHLAL).

The protein belongs to the DoxX family.

It is found in the cell membrane. Its function is as follows. Essential for growth and viability in the presence of catechol and probably involved in the detoxification of catechol. The polypeptide is Putative oxidoreductase CatD (catD) (Bacillus subtilis (strain 168)).